Consider the following 254-residue polypeptide: Imidazole glycerol phosphate synthase subunit HisF (254 aa).

Residues D12 and D131 contribute to the active site.

It belongs to the HisA/HisF family. In terms of assembly, heterodimer of HisH and HisF.

It is found in the cytoplasm. It carries out the reaction 5-[(5-phospho-1-deoxy-D-ribulos-1-ylimino)methylamino]-1-(5-phospho-beta-D-ribosyl)imidazole-4-carboxamide + L-glutamine = D-erythro-1-(imidazol-4-yl)glycerol 3-phosphate + 5-amino-1-(5-phospho-beta-D-ribosyl)imidazole-4-carboxamide + L-glutamate + H(+). It participates in amino-acid biosynthesis; L-histidine biosynthesis; L-histidine from 5-phospho-alpha-D-ribose 1-diphosphate: step 5/9. In terms of biological role, IGPS catalyzes the conversion of PRFAR and glutamine to IGP, AICAR and glutamate. The HisF subunit catalyzes the cyclization activity that produces IGP and AICAR from PRFAR using the ammonia provided by the HisH subunit. The chain is Imidazole glycerol phosphate synthase subunit HisF from Desulfitobacterium hafniense (strain Y51).